The chain runs to 177 residues: ATP synthase subunit delta (177 aa).

Belongs to the ATPase delta chain family. F-type ATPases have 2 components, F(1) - the catalytic core - and F(0) - the membrane proton channel. F(1) has five subunits: alpha(3), beta(3), gamma(1), delta(1), epsilon(1). F(0) has three main subunits: a(1), b(2) and c(10-14). The alpha and beta chains form an alternating ring which encloses part of the gamma chain. F(1) is attached to F(0) by a central stalk formed by the gamma and epsilon chains, while a peripheral stalk is formed by the delta and b chains.

The protein resides in the cell membrane. Its function is as follows. F(1)F(0) ATP synthase produces ATP from ADP in the presence of a proton or sodium gradient. F-type ATPases consist of two structural domains, F(1) containing the extramembraneous catalytic core and F(0) containing the membrane proton channel, linked together by a central stalk and a peripheral stalk. During catalysis, ATP synthesis in the catalytic domain of F(1) is coupled via a rotary mechanism of the central stalk subunits to proton translocation. Functionally, this protein is part of the stalk that links CF(0) to CF(1). It either transmits conformational changes from CF(0) to CF(1) or is implicated in proton conduction. This Carboxydothermus hydrogenoformans (strain ATCC BAA-161 / DSM 6008 / Z-2901) protein is ATP synthase subunit delta.